A 517-amino-acid chain; its full sequence is Endoglycoceramidase (517 aa).

An N-terminal signal peptide occupies residues 1–17 (MISVALIILFLAKVISG). An N-linked (GlcNAc...) asparagine glycan is attached at Asn-99. Glu-230 functions as the Proton donor in the catalytic mechanism. Residues Asn-298, Asn-380, and Asn-393 are each glycosylated (N-linked (GlcNAc...) asparagine).

This sequence belongs to the glycosyl hydrolase 5 (cellulase A) family. Expressed uniformly in digestive cells, tentacles and peduncle regions suggesting expression in the endoderm throughout the whole body (at protein level).

The protein resides in the secreted. It carries out the reaction an oligoglycosyl-(1-&gt;4)-beta-D-glucosyl-(1&lt;-&gt;1)-ceramide + H2O = an oligoglycosyl-(1-&gt;4)-D-glucose + an N-acyl-sphingoid base. Its activity is regulated as follows. Cu(2+), zinc, manganese, calcium, magnesium and EDTA have no significant effects on enzyme activity. Enzyme requires presence of detergents such as Triton X-100 and Lubrol PX for the hydrolysis of glycosphingolipids. Taurodeoxycholate strongly inhibits the enzyme activity. Hydrolysis of the glycosidic linkage between oligosaccharides and ceramides of glycosphingolipids, optimal substrates appear to be the glycosphingolipids with a gangliotetraose structure. This Hydra vulgaris (Hydra) protein is Endoglycoceramidase.